We begin with the raw amino-acid sequence, 385 residues long: 8-amino-7-oxononanoate synthase (385 aa).

Arg-21 is a substrate binding site. A pyridoxal 5'-phosphate-binding site is contributed by 108 to 109; the sequence is GF. His-133 provides a ligand contact to substrate. 3 residues coordinate pyridoxal 5'-phosphate: Ser-179, His-207, and Thr-233. The residue at position 236 (Lys-236) is an N6-(pyridoxal phosphate)lysine. Thr-352 provides a ligand contact to substrate.

Belongs to the class-II pyridoxal-phosphate-dependent aminotransferase family. BioF subfamily. Homodimer. The cofactor is pyridoxal 5'-phosphate.

The catalysed reaction is 6-carboxyhexanoyl-[ACP] + L-alanine + H(+) = (8S)-8-amino-7-oxononanoate + holo-[ACP] + CO2. It functions in the pathway cofactor biosynthesis; biotin biosynthesis. Its function is as follows. Catalyzes the decarboxylative condensation of pimeloyl-[acyl-carrier protein] and L-alanine to produce 8-amino-7-oxononanoate (AON), [acyl-carrier protein], and carbon dioxide. This Salmonella dublin (strain CT_02021853) protein is 8-amino-7-oxononanoate synthase.